Reading from the N-terminus, the 425-residue chain is Serine--tRNA ligase (425 aa).

Residue 231 to 233 coordinates L-serine; that stretch reads TAE. An ATP-binding site is contributed by 262 to 264; the sequence is RSE. Glu285 provides a ligand contact to L-serine. 349-352 serves as a coordination point for ATP; sequence EISS. Ser385 contributes to the L-serine binding site.

Belongs to the class-II aminoacyl-tRNA synthetase family. Type-1 seryl-tRNA synthetase subfamily. As to quaternary structure, homodimer. The tRNA molecule binds across the dimer.

It localises to the cytoplasm. It carries out the reaction tRNA(Ser) + L-serine + ATP = L-seryl-tRNA(Ser) + AMP + diphosphate + H(+). It catalyses the reaction tRNA(Sec) + L-serine + ATP = L-seryl-tRNA(Sec) + AMP + diphosphate + H(+). It participates in aminoacyl-tRNA biosynthesis; selenocysteinyl-tRNA(Sec) biosynthesis; L-seryl-tRNA(Sec) from L-serine and tRNA(Sec): step 1/1. In terms of biological role, catalyzes the attachment of serine to tRNA(Ser). Is also able to aminoacylate tRNA(Sec) with serine, to form the misacylated tRNA L-seryl-tRNA(Sec), which will be further converted into selenocysteinyl-tRNA(Sec). This chain is Serine--tRNA ligase, found in Bacillus velezensis (strain DSM 23117 / BGSC 10A6 / LMG 26770 / FZB42) (Bacillus amyloliquefaciens subsp. plantarum).